Reading from the N-terminus, the 322-residue chain is 6-deoxy-6-sulfo-D-fructose transketolase subunit SqwH (322 aa).

This sequence belongs to the transketolase family. As to quaternary structure, forms a complex with SqwG. The cofactor is thiamine diphosphate.

It carries out the reaction 6-deoxy-6-sulfo-D-fructose + D-glyceraldehyde 3-phosphate = 4-deoxy-4-sulfo-D-erythrose + D-xylulose 5-phosphate. The enzyme catalyses 4-deoxy-4-sulfo-D-erythrulose + D-glyceraldehyde 3-phosphate = sulfoacetaldehyde + D-xylulose 5-phosphate. Part of the sulfo-TK pathway, a D-sulfoquinovose degradation pathway that produces 2-hydroxyethane-1-sulfonate (isethionate). Catalyzes two steps of the pathway: the formation of 4-deoxy-4-sulfoerythrose (SE) and xylulose 5-phosphate from 6-deoxy-6-sulfo-D-fructose (SF) and glyceraldehyde 3-phosphate, and the formation of sulfoacetaldehyde (SA) and xylulose 5-phosphate from 4-deoxy-4-sulfo-D-erythrulose (SEu) and glyceraldehyde 3-phosphate. This Clostridium sp. (strain MSTE9) protein is 6-deoxy-6-sulfo-D-fructose transketolase subunit SqwH.